A 131-amino-acid polypeptide reads, in one-letter code: Profilin-1 (131 aa).

The protein belongs to the profilin family. As to quaternary structure, occurs in many kinds of cells as a complex with monomeric actin in a 1:1 ratio.

The protein localises to the cytoplasm. Its subcellular location is the cytoskeleton. Functionally, binds to actin and affects the structure of the cytoskeleton. At high concentrations, profilin prevents the polymerization of actin, whereas it enhances it at low concentrations. By binding to PIP2, it inhibits the formation of IP3 and DG. This Malus domestica (Apple) protein is Profilin-1.